The following is a 123-amino-acid chain: MAITKEDILEAVGSLTVMELNDLVKAFEEKFGVSAAAVAVAGPAGAGAADAEEKTEFDVVLASAGDQKVGVIKVVRAITGLGLKEAKDIVDGAPKTIKEGVSKAEAEDIQKQLEEAGAKVEIK.

Belongs to the bacterial ribosomal protein bL12 family. In terms of assembly, homodimer. Part of the ribosomal stalk of the 50S ribosomal subunit. Forms a multimeric L10(L12)X complex, where L10 forms an elongated spine to which 2 to 4 L12 dimers bind in a sequential fashion. Binds GTP-bound translation factors.

In terms of biological role, forms part of the ribosomal stalk which helps the ribosome interact with GTP-bound translation factors. Is thus essential for accurate translation. The sequence is that of Large ribosomal subunit protein bL12 from Neisseria meningitidis serogroup C (strain 053442).